A 185-amino-acid polypeptide reads, in one-letter code: MALRRILRIDNPDDKKILTTRCHPVRLPNPALKQLVADMFETMHAASGVGLAAPQIGITQRLAVISIPPVVEERPDGSKVEVAPEQNFVLINPEIIKASDQEDVGLEGCLSLPGWYGEVPRAAWVTVEYTDLNGRRQRIRRATGLLGRALQHEIDHLDGILFTERIRDLSTLKDYSEEMAPTAAE.

2 residues coordinate Fe cation: cysteine 109 and histidine 152. Residue glutamate 153 is part of the active site. Histidine 156 provides a ligand contact to Fe cation.

It belongs to the polypeptide deformylase family. Fe(2+) serves as cofactor.

The catalysed reaction is N-terminal N-formyl-L-methionyl-[peptide] + H2O = N-terminal L-methionyl-[peptide] + formate. Its function is as follows. Removes the formyl group from the N-terminal Met of newly synthesized proteins. Requires at least a dipeptide for an efficient rate of reaction. N-terminal L-methionine is a prerequisite for activity but the enzyme has broad specificity at other positions. This is Peptide deformylase from Roseiflexus sp. (strain RS-1).